We begin with the raw amino-acid sequence, 130 residues long: Phosphomevalonate dehydratase small subunit (130 aa).

The active-site Proton acceptor is S62.

Belongs to the AcnX type II small subunit family. In terms of assembly, heterodimer composed of a large subunit (PMDh-L) and a small subunit (PMDh-S).

The enzyme catalyses (R)-5-phosphomevalonate = (2E)-3-methyl-5-phosphooxypent-2-enoate + H2O. It participates in isoprenoid biosynthesis; isopentenyl diphosphate biosynthesis via mevalonate pathway. Its function is as follows. Component of a hydro-lyase that catalyzes the dehydration of mevalonate 5-phosphate (MVA5P) to form trans-anhydromevalonate 5-phosphate (tAHMP). Involved in the archaeal mevalonate (MVA) pathway, which provides fundamental precursors for isoprenoid biosynthesis, such as isopentenyl diphosphate (IPP) and dimethylallyl diphosphate (DMAPP). The protein is Phosphomevalonate dehydratase small subunit of Thermococcus sibiricus (strain DSM 12597 / MM 739).